Reading from the N-terminus, the 58-residue chain is Large ribosomal subunit protein eL37 (58 aa).

A compositionally biased stretch (polar residues) spans 1–17; it reads MTGAGTPSQGKKNTTTH. Residues 1 to 26 form a disordered region; it reads MTGAGTPSQGKKNTTTHTKCRRCGEK. Residues cysteine 20, cysteine 23, cysteine 35, and cysteine 38 each contribute to the Zn(2+) site. The C4-type zinc finger occupies 20-38; the sequence is CRRCGEKSYHTKKKVCSSC.

Belongs to the eukaryotic ribosomal protein eL37 family. Requires Zn(2+) as cofactor.

In terms of biological role, binds to the 23S rRNA. The sequence is that of Large ribosomal subunit protein eL37 from Halobacterium salinarum (strain ATCC 29341 / DSM 671 / R1).